We begin with the raw amino-acid sequence, 136 residues long: Small ribosomal subunit protein uS9 (136 aa).

A disordered region spans residues 95 to 136 (GLSPDNRKPLKTEGHLSRDPRSKERKKYGLKKARKAGQFSKR). Positions 99–116 (DNRKPLKTEGHLSRDPRS) are enriched in basic and acidic residues. The span at 117 to 136 (KERKKYGLKKARKAGQFSKR) shows a compositional bias: basic residues.

This sequence belongs to the universal ribosomal protein uS9 family.

The protein is Small ribosomal subunit protein uS9 of Prochlorococcus marinus subsp. pastoris (strain CCMP1986 / NIES-2087 / MED4).